The chain runs to 86 residues: Putative membrane protein insertion efficiency factor (86 aa).

Positions 67-86 are disordered; the sequence is LHEGGDDPVPPVKNNDNREH.

Belongs to the UPF0161 family.

The protein localises to the cell inner membrane. In terms of biological role, could be involved in insertion of integral membrane proteins into the membrane. The protein is Putative membrane protein insertion efficiency factor of Photorhabdus laumondii subsp. laumondii (strain DSM 15139 / CIP 105565 / TT01) (Photorhabdus luminescens subsp. laumondii).